We begin with the raw amino-acid sequence, 666 residues long: Semaphorin-7A (666 aa).

The segment at 1–21 (MTPPPPGRAAPSAPRARVPGP) is disordered. A signal peptide spans 1 to 44 (MTPPPPGRAAPSAPRARVPGPPARLGLPLRLRLLLLLWAAAASA). Over residues 9–21 (AAPSAPRARVPGP) the composition is skewed to low complexity. Residues 53 to 490 (RIFAVWKGHV…SQWEVSQVPL (438 aa)) form the Sema domain. An N-linked (GlcNAc...) asparagine glycan is attached at asparagine 105. Cysteine 120 and cysteine 126 are disulfide-bonded. At arginine 135 the chain carries Asymmetric dimethylarginine. A disulfide bond links cysteine 143 and cysteine 152. N-linked (GlcNAc...) asparagine glycosylation is found at asparagine 157 and asparagine 258. Cystine bridges form between cysteine 266-cysteine 366, cysteine 291-cysteine 335, cysteine 493-cysteine 511, cysteine 500-cysteine 541, cysteine 503-cysteine 518, cysteine 566-cysteine 613, and cysteine 587-cysteine 596. The interaction with integrins stretch occupies residues 267-269 (RGD). The short motif at 267-269 (RGD) is the Cell attachment site element. N-linked (GlcNAc...) asparagine glycosylation is present at asparagine 330. Residues 544–629 (PKPDKAPLQK…YFREAQHWQL (86 aa)) form the Ig-like C2-type domain. Asparagine 602 carries N-linked (GlcNAc...) asparagine glycosylation. Alanine 648 carries the GPI-anchor amidated alanine lipid modification. The propeptide at 649–666 (ASLWLGVLPTLTLGLLVH) is removed in mature form.

The protein belongs to the semaphorin family. As to quaternary structure, interacts with ITGA1 and ITGB1. Interacts with PLXNC1. Detected in skin keratinocytes and on endothelial cells from skin blood vessels (at protein level). Expressed in fibroblasts, keratinocytes, melanocytes, placenta, testis, ovary, spleen, brain, spinal cord, lung, heart, adrenal gland, lymph nodes, thymus, intestine and kidney.

Its subcellular location is the cell membrane. Functionally, plays an important role in integrin-mediated signaling and functions both in regulating cell migration and immune responses. Promotes formation of focal adhesion complexes, activation of the protein kinase PTK2/FAK1 and subsequent phosphorylation of MAPK1 and MAPK3. Promotes production of pro-inflammatory cytokines by monocytes and macrophages. Plays an important role in modulating inflammation and T-cell-mediated immune responses. Promotes axon growth in the embryonic olfactory bulb. Promotes attachment, spreading and dendrite outgrowth in melanocytes. The sequence is that of Semaphorin-7A (SEMA7A) from Homo sapiens (Human).